The primary structure comprises 229 residues: 5'-methylthioadenosine/S-adenosylhomocysteine nucleosidase (229 aa).

E12 serves as the catalytic Proton acceptor. Substrate is bound by residues G78, I152, and 173–174; that span reads ME. Residue D197 is the Proton donor of the active site.

It belongs to the PNP/UDP phosphorylase family. MtnN subfamily.

It catalyses the reaction S-adenosyl-L-homocysteine + H2O = S-(5-deoxy-D-ribos-5-yl)-L-homocysteine + adenine. It carries out the reaction S-methyl-5'-thioadenosine + H2O = 5-(methylsulfanyl)-D-ribose + adenine. The enzyme catalyses 5'-deoxyadenosine + H2O = 5-deoxy-D-ribose + adenine. It functions in the pathway amino-acid biosynthesis; L-methionine biosynthesis via salvage pathway; S-methyl-5-thio-alpha-D-ribose 1-phosphate from S-methyl-5'-thioadenosine (hydrolase route): step 1/2. Catalyzes the irreversible cleavage of the glycosidic bond in both 5'-methylthioadenosine (MTA) and S-adenosylhomocysteine (SAH/AdoHcy) to adenine and the corresponding thioribose, 5'-methylthioribose and S-ribosylhomocysteine, respectively. Also cleaves 5'-deoxyadenosine, a toxic by-product of radical S-adenosylmethionine (SAM) enzymes, into 5-deoxyribose and adenine. The protein is 5'-methylthioadenosine/S-adenosylhomocysteine nucleosidase of Haemophilus influenzae (strain PittEE).